Consider the following 222-residue polypeptide: Protein-L-isoaspartate O-methyltransferase (222 aa).

Ser-69 is an active-site residue.

Belongs to the methyltransferase superfamily. L-isoaspartyl/D-aspartyl protein methyltransferase family.

The protein localises to the cytoplasm. It carries out the reaction [protein]-L-isoaspartate + S-adenosyl-L-methionine = [protein]-L-isoaspartate alpha-methyl ester + S-adenosyl-L-homocysteine. In terms of biological role, catalyzes the methyl esterification of L-isoaspartyl residues in peptides and proteins that result from spontaneous decomposition of normal L-aspartyl and L-asparaginyl residues. It plays a role in the repair and/or degradation of damaged proteins. The protein is Protein-L-isoaspartate O-methyltransferase of Nitrosomonas eutropha (strain DSM 101675 / C91 / Nm57).